A 504-amino-acid chain; its full sequence is PE-PGRS family protein PE_PGRS62 (504 aa).

A PE domain is found at 4–94; the sequence is VVTVPEAVAA…AAYLNTESAN (91 aa).

It belongs to the mycobacterial PE family. PGRS subfamily. In terms of assembly, interacts with host Toll-like receptor 2 (TLR2).

Its subcellular location is the secreted. It is found in the cell wall. Its function is as follows. Supports mycobacterial virulence via inhibition of phagosome maturation and host inducible nitric oxide synthase (iNOS) expression. May promote the survival within macrophages by disturbing the cytokines profiles and blocking the endoplasmic reticulum (ER) stress-mediated apoptosis. May also affect bacterial cell wall composition. In terms of biological role, expression in Mycobacterium smegmatis, a nonpathogenic species naturally deficient in PE_PGRS genes, results in enhanced resistance to various in vitro stresses. It also leads to phagosome maturation arrest and increased survival in macrophages. In Mycobacterium tuberculosis (strain ATCC 25618 / H37Rv), this protein is PE-PGRS family protein PE_PGRS62.